Consider the following 681-residue polypeptide: UvrABC system protein B (681 aa).

A Helicase ATP-binding domain is found at 32-419 (ARLSRGERDV…GGEYVEQVIR (388 aa)). 45 to 52 (GATGTGKS) contributes to the ATP binding site. The Beta-hairpin signature appears at 98 to 121 (YYDYYQPEAYIAQTDTYIEKDSSI). The Helicase C-terminal domain maps to 436-602 (QIDDLIHEIK…PLRKKIADIL (167 aa)). Positions 607-616 (ESKAESTAPS) are enriched in polar residues. Residues 607 to 626 (ESKAESTAPSSDAVVVSKTN) are disordered. One can recognise a UVR domain in the interval 636–671 (RSLIDDLTTQMGTAARELKFELAGRLRDEIAELKKE).

This sequence belongs to the UvrB family. Forms a heterotetramer with UvrA during the search for lesions. Interacts with UvrC in an incision complex.

It localises to the cytoplasm. In terms of biological role, the UvrABC repair system catalyzes the recognition and processing of DNA lesions. A damage recognition complex composed of 2 UvrA and 2 UvrB subunits scans DNA for abnormalities. Upon binding of the UvrA(2)B(2) complex to a putative damaged site, the DNA wraps around one UvrB monomer. DNA wrap is dependent on ATP binding by UvrB and probably causes local melting of the DNA helix, facilitating insertion of UvrB beta-hairpin between the DNA strands. Then UvrB probes one DNA strand for the presence of a lesion. If a lesion is found the UvrA subunits dissociate and the UvrB-DNA preincision complex is formed. This complex is subsequently bound by UvrC and the second UvrB is released. If no lesion is found, the DNA wraps around the other UvrB subunit that will check the other stand for damage. This is UvrABC system protein B from Corynebacterium diphtheriae (strain ATCC 700971 / NCTC 13129 / Biotype gravis).